Consider the following 940-residue polypeptide: Alanine--tRNA ligase (940 aa).

Histidine 581, histidine 585, cysteine 683, and histidine 687 together coordinate Zn(2+).

Belongs to the class-II aminoacyl-tRNA synthetase family. It depends on Zn(2+) as a cofactor.

The protein resides in the cytoplasm. It catalyses the reaction tRNA(Ala) + L-alanine + ATP = L-alanyl-tRNA(Ala) + AMP + diphosphate. Catalyzes the attachment of alanine to tRNA(Ala) in a two-step reaction: alanine is first activated by ATP to form Ala-AMP and then transferred to the acceptor end of tRNA(Ala). Also edits incorrectly charged Ser-tRNA(Ala) and Gly-tRNA(Ala) via its editing domain. This Leptospira borgpetersenii serovar Hardjo-bovis (strain L550) protein is Alanine--tRNA ligase.